Reading from the N-terminus, the 471-residue chain is Alpha-galactosidase 5 (471 aa).

Residues 1–18 (MFAFYFLTACTTLKGVFG) form the signal peptide. Residues Cys42 and Cys74 are joined by a disulfide bond. Substrate-binding residues include Asp72 and Asp73. Asn105 carries an N-linked (GlcNAc...) asparagine glycan. A disulfide bridge connects residues Cys121 and Cys151. Substrate is bound at residue Lys147. Asp149 (nucleophile) is an active-site residue. N-linked (GlcNAc...) asparagine glycosylation is present at Asn175. Residue Arg205 participates in substrate binding. Catalysis depends on Asp209, which acts as the Proton donor. 2 disulfides stabilise this stretch: Cys221–Cys237 and Cys223–Cys230. A substrate-binding site is contributed by Gln251. 6 N-linked (GlcNAc...) asparagine glycosylation sites follow: Asn270, Asn370, Asn403, Asn422, Asn435, and Asn454.

This sequence belongs to the glycosyl hydrolase 27 family. In terms of assembly, homotetramer.

Its subcellular location is the secreted. It catalyses the reaction Hydrolysis of terminal, non-reducing alpha-D-galactose residues in alpha-D-galactosides, including galactose oligosaccharides, galactomannans and galactolipids.. This is Alpha-galactosidase 5 (MEL5) from Saccharomyces cerevisiae (Baker's yeast).